We begin with the raw amino-acid sequence, 403 residues long: Protein LAZ1 homolog 2 (403 aa).

Transmembrane regions (helical) follow at residues 16–36 (SLIIGGSFATVAICLSLYSIL), 50–70 (WIVSVLFMVPVYATESIISLS), 162–182 (MILKTFCAFLTFLLELLGVYG), 191–211 (GYPYIVVVLNFSQMWALFCLV), 236–256 (IVFATWWQGFGIALLCYYGIL), and 269–289 (FLICIEMAIAAVAHLFVFPAE). The segment at 381 to 403 (SDGKEETEVTEEVTVETSVPPKE) is disordered.

Belongs to the TMEM184 family.

It localises to the membrane. In Arabidopsis thaliana (Mouse-ear cress), this protein is Protein LAZ1 homolog 2.